Consider the following 545-residue polypeptide: Squalene monooxygenase SE2 (545 aa).

The helical transmembrane segment at 12–32 (EYFLMFAATLLFGFVLYLFTL) threads the bilayer. FAD is bound by residues 86 to 87 (VA), 106 to 107 (ER), arginine 114, arginine 185, valine 201, aspartate 364, and methionine 377. A run of 2 helical transmembrane segments spans residues 475–495 (LFFH…IPFP) and 500–520 (MWLG…IIKS).

Belongs to the squalene monooxygenase family. The cofactor is FAD. Weak expression in petioles and flower buds and barely detectable in roots and leaves. In petioles, preferentially observed in vascular bundle tissue (phloem cells and parenchymatous cells near xylem) and resin ducts.

It is found in the membrane. The enzyme catalyses squalene + reduced [NADPH--hemoprotein reductase] + O2 = (S)-2,3-epoxysqualene + oxidized [NADPH--hemoprotein reductase] + H2O + H(+). Its pathway is terpene metabolism; lanosterol biosynthesis; lanosterol from farnesyl diphosphate: step 2/3. Functionally, component of the triterpene saponins (e.g. ginsenosides or panaxosides) and phytosterols biosynthetic pathways. Catalyzes the first oxygenation step in sterol biosynthesis and is suggested to be one of the rate-limiting enzymes in this pathway. The chain is Squalene monooxygenase SE2 from Panax ginseng (Korean ginseng).